Here is a 579-residue protein sequence, read N- to C-terminus: Zinc finger-containing ubiquitin peptidase 1 (579 aa).

Residues 2 to 25 (LSCDICGETVSSEPDMKAHLLIVH) form a C2H2-type 1 zinc finger. The C2H2-type 2; atypical zinc finger occupies 30-53 (VICPFCKLSGVNYDEMCFHIETAH). 2 C2H2-type zinc fingers span residues 155 to 178 (PECP…KTKH) and 194 to 216 (YDCP…VDLH). The interval 227-249 (NRVQCSRDLELAQQLQQEEDRKR) is MIU. A zUBD/ZHA region spans residues 250–275 (RSEESRQEMEEFQKLQRQYGLDNSGG). Lys263 is subject to N6-acetyllysine. Cys361 functions as the Nucleophile in the catalytic mechanism. The active-site Proton acceptor is His492. Residue Asp513 is part of the active site.

This sequence belongs to the peptidase C78 family. ZUFSP subfamily. In terms of assembly, interacts with RPA1 and RPA2.

It localises to the cytoplasm. The protein localises to the nucleus. It catalyses the reaction Thiol-dependent hydrolysis of ester, thioester, amide, peptide and isopeptide bonds formed by the C-terminal Gly of ubiquitin (a 76-residue protein attached to proteins as an intracellular targeting signal).. In terms of biological role, deubiquitinase with endodeubiquitinase activity that specifically interacts with and cleaves 'Lys-63'-linked long polyubiquitin chains. Shows only weak activity against 'Lys-11' and 'Lys-48'-linked chains. Plays an important role in genome stability pathways, functioning to prevent spontaneous DNA damage and also promote cellular survival in response to exogenous DNA damage. Modulates the ubiquitination status of replication protein A (RPA) complex proteins in response to replication stress. The protein is Zinc finger-containing ubiquitin peptidase 1 of Bos taurus (Bovine).